Reading from the N-terminus, the 479-residue chain is NADH-quinone oxidoreductase subunit N (479 aa).

14 consecutive transmembrane segments (helical) span residues 3–23 (MLYG…FQLI), 40–60 (IGFA…FNGI), 77–97 (IIIL…IKVA), 102–122 (HSEY…LVSA), 125–145 (FMVM…LTTF), 159–179 (YFIL…LVYG), 200–220 (MAVL…KLSI), 234–254 (APLV…LALL), 268–288 (FFYI…VGAF), 299–319 (FIAY…VANS), 327–347 (ISYF…AIII), 373–393 (SILI…AGFI), 409–429 (ELII…LNIV), and 452–472 (LVSI…MLFG).

Belongs to the complex I subunit 2 family. NDH-1 is composed of 14 different subunits. Subunits NuoA, H, J, K, L, M, N constitute the membrane sector of the complex.

The protein resides in the cell inner membrane. It catalyses the reaction a quinone + NADH + 5 H(+)(in) = a quinol + NAD(+) + 4 H(+)(out). In terms of biological role, NDH-1 shuttles electrons from NADH, via FMN and iron-sulfur (Fe-S) centers, to quinones in the respiratory chain. The immediate electron acceptor for the enzyme in this species is believed to be ubiquinone. Couples the redox reaction to proton translocation (for every two electrons transferred, four hydrogen ions are translocated across the cytoplasmic membrane), and thus conserves the redox energy in a proton gradient. This chain is NADH-quinone oxidoreductase subunit N, found in Orientia tsutsugamushi (strain Ikeda) (Rickettsia tsutsugamushi).